We begin with the raw amino-acid sequence, 540 residues long: Threonine--tRNA ligase catalytic subunit (540 aa).

Residues 134–428 form a catalytic region; the sequence is DHRIIGERLD…LLEHFRGKLP (295 aa). Positions 226, 277, and 405 each coordinate Zn(2+).

The protein belongs to the class-II aminoacyl-tRNA synthetase family. Homodimer. Probably interacts with its editing subunit. It depends on Zn(2+) as a cofactor.

It is found in the cytoplasm. It catalyses the reaction tRNA(Thr) + L-threonine + ATP = L-threonyl-tRNA(Thr) + AMP + diphosphate + H(+). Functionally, catalyzes the attachment of threonine to tRNA(Thr) in a two-step reaction: L-threonine is first activated by ATP to form Thr-AMP and then transferred to the acceptor end of tRNA(Thr). Also activates L-serine and transfers it to tRNA(Thr) but cannot deacylate incorrectly charged amino acid; unlike most archaea the editing function is found in a freestanding protein. In Sulfurisphaera tokodaii (strain DSM 16993 / JCM 10545 / NBRC 100140 / 7) (Sulfolobus tokodaii), this protein is Threonine--tRNA ligase catalytic subunit.